The sequence spans 213 residues: Redox-sensing transcriptional repressor Rex (213 aa).

Positions 16–55 (VYSRFLERMDRNGIVTVSSGEIAEGVGVSSAQVRKDLAYF) form a DNA-binding region, H-T-H motif. 90–95 (GAGNLG) serves as a coordination point for NAD(+).

This sequence belongs to the transcriptional regulatory Rex family. As to quaternary structure, homodimer.

It is found in the cytoplasm. In terms of biological role, modulates transcription in response to changes in cellular NADH/NAD(+) redox state. The polypeptide is Redox-sensing transcriptional repressor Rex (Pelotomaculum thermopropionicum (strain DSM 13744 / JCM 10971 / SI)).